An 896-amino-acid chain; its full sequence is MLKYISYSEKRKIKLRGIKMSADTPLMQQYKKIKEEYQNEILMFRLGDFYEMFFEDAKIASKELGLTLTKRNREKGQDVPLAGVPYHSVASYIAKLVEKGYSVAICDQVEDPKSATGIVKREVTRVITPGTIIDVDFLDKNNNNYIACIKINTTENIVAIAYTDITTGEFSVFEIKGKNFFEKALAEMNKIQASEILLDEKTYSEYIEILKEKISFLGVKFTEVPNVRKAESYLTSYFDIMSIEVFSLKSKDLAISTSANLLHYIDELQKGNELPFSKIEYKNIDNIMELNISTQNNLNLVPKRNEEAKGTLLGVLDNCVTSVGSRELKKIIKNPFLDIEKIKQRQFYVDYFYNDVLLRENIREYLKDIYDVERIAGKIIYGTENGKDLLSLKESIRKSLETYKVLKEHQEIKDILDIDVKILLDIYNKIELIINIEAPFSVREGGIIKDGYNSELDKLRKISKLGKDFILEIEQRERERTGIKGLKIKYNKVFGYFIEVTKANEHLVPEDYIRKQTLVNSERYIVPDLKEYEEKVITAKSKIEALEYELFKQLTSEIKGHIDSLYKLANRIANLDIVSNFAHIATKNSYVKPEIGDGDILEIKGGRHPIVESLIPSGTYVKNDIILDDKNNLIILTGPNMSGKSTYMKQVALNIIMAHIGSYVAADCAKIPIVDKIFTRVGASDDLLTGQSTFMLEMTEVASILNNATNKSFIVLDEIGRGTSTYDGISIATAITEYIHNNIGAKTIFATHYHELTELEKELERAINFRVEVKEDGKNVVFLREIVKGGADKSYGIEVARLSGVPKEVLNRSNKILKKLETRKNLIENKIKAEQMILFGNGFEEENEEEETEILSENESKVLELLKNMDLNSLSPLESLLKLNELKKILIGGTDE.

638-645 (GPNMSGKS) is a binding site for ATP.

It belongs to the DNA mismatch repair MutS family.

In terms of biological role, this protein is involved in the repair of mismatches in DNA. It is possible that it carries out the mismatch recognition step. This protein has a weak ATPase activity. In Fusobacterium nucleatum subsp. nucleatum (strain ATCC 25586 / DSM 15643 / BCRC 10681 / CIP 101130 / JCM 8532 / KCTC 2640 / LMG 13131 / VPI 4355), this protein is DNA mismatch repair protein MutS.